The chain runs to 412 residues: Imidazolonepropionase (412 aa).

Fe(3+) is bound by residues histidine 76 and histidine 78. 2 residues coordinate Zn(2+): histidine 76 and histidine 78. Arginine 85, tyrosine 148, and histidine 181 together coordinate 4-imidazolone-5-propanoate. An N-formimidoyl-L-glutamate-binding site is contributed by tyrosine 148. Position 242 (histidine 242) interacts with Fe(3+). Zn(2+) is bound at residue histidine 242. Glutamate 245 is a 4-imidazolone-5-propanoate binding site. Residue aspartate 317 participates in Fe(3+) binding. Aspartate 317 contacts Zn(2+). Residues asparagine 319 and glycine 321 each contribute to the N-formimidoyl-L-glutamate site. 4-imidazolone-5-propanoate is bound at residue serine 322.

It belongs to the metallo-dependent hydrolases superfamily. HutI family. It depends on Zn(2+) as a cofactor. The cofactor is Fe(3+).

The protein localises to the cytoplasm. It catalyses the reaction 4-imidazolone-5-propanoate + H2O = N-formimidoyl-L-glutamate. The protein operates within amino-acid degradation; L-histidine degradation into L-glutamate; N-formimidoyl-L-glutamate from L-histidine: step 3/3. In terms of biological role, catalyzes the hydrolytic cleavage of the carbon-nitrogen bond in imidazolone-5-propanoate to yield N-formimidoyl-L-glutamate. It is the third step in the universal histidine degradation pathway. The sequence is that of Imidazolonepropionase from Staphylococcus aureus (strain USA300 / TCH1516).